Consider the following 634-residue polypeptide: DNA gyrase subunit B (634 aa).

The ATPase domain stretch occupies residues 1 to 220 (MSYDASAIRV…EEVFLDKGGV (220 aa)). The transducer domain stretch occupies residues 221–390 (ASFAKALAEG…EAARKARELV (170 aa)). The Toprim domain occupies 416–534 (AELFIVEGDS…RGHVYIAQPP (119 aa)). Mg(2+) is bound by residues glutamate 422, aspartate 499, and aspartate 501.

The protein belongs to the type II topoisomerase GyrB family. In terms of assembly, heterotetramer, composed of two GyrA and two GyrB chains. Non-hydrolyzable ATP analogs induce dimerization, novobiocin also induces a small amount of dimerization. The two subunits form an intertwined dimer where the GyrB ATPase transducer helix of 1 subunit connects to the Toprim domain of the other GyrB subunit through a 10 residue linker. In the heterotetramer, GyrA contains the active site tyrosine that forms a covalent intermediate with the DNA, while GyrB binds cofactors and catalyzes ATP hydrolysis. Requires Mg(2+) as cofactor. Mn(2+) is required as a cofactor. It depends on Ca(2+) as a cofactor.

The protein resides in the cytoplasm. The enzyme catalyses ATP-dependent breakage, passage and rejoining of double-stranded DNA.. Functionally, a type II topoisomerase that negatively supercoils closed circular double-stranded (ds) DNA in an ATP-dependent manner. It probably also catalyzes the interconversion of other topological isomers of double-stranded DNA rings, including catenanes. Relaxes negatively supercoiled DNA in an ATP-independent manner. At comparable concentrations T.thermophilus gyrase does not introduce as many negative supercoils into DNA as the E.coli enzyme. In terms of biological role, negative supercoiling favors strand separation, and DNA replication, transcription, recombination and repair, all of which involve strand separation. Type II topoisomerases break and join 2 DNA strands simultaneously in an ATP-dependent manner. This is DNA gyrase subunit B from Thermus thermophilus (strain ATCC 27634 / DSM 579 / HB8).